The following is a 221-amino-acid chain: Iron-sulfur cluster assembly SufBD family protein ycf24 (221 aa).

Belongs to the iron-sulfur cluster assembly SufBD family.

It is found in the plastid. The protein localises to the chloroplast. This Galdieria sulphuraria (Red alga) protein is Iron-sulfur cluster assembly SufBD family protein ycf24 (ycf24).